We begin with the raw amino-acid sequence, 280 residues long: Urease accessory protein UreD (280 aa).

This sequence belongs to the UreD family. As to quaternary structure, ureD, UreF and UreG form a complex that acts as a GTP-hydrolysis-dependent molecular chaperone, activating the urease apoprotein by helping to assemble the nickel containing metallocenter of UreC. The UreE protein probably delivers the nickel.

The protein resides in the cytoplasm. Its function is as follows. Required for maturation of urease via the functional incorporation of the urease nickel metallocenter. The protein is Urease accessory protein UreD of Vibrio parahaemolyticus.